Consider the following 288-residue polypeptide: Eukaryotic translation initiation factor 3 subunit G (288 aa).

2 disordered regions span residues 1 to 33 and 156 to 197; these read MSKLGNRADWADDEEFDDPSALPPQQITTNKDG and DEPT…GGER. In terms of domain architecture, RRM spans 208-286; the sequence is ATLRVTNVSE…LILRVEFAKR (79 aa).

The protein belongs to the eIF-3 subunit G family. As to quaternary structure, component of the eukaryotic translation initiation factor 3 (eIF-3) complex.

It is found in the cytoplasm. In terms of biological role, RNA-binding component of the eukaryotic translation initiation factor 3 (eIF-3) complex, which is involved in protein synthesis of a specialized repertoire of mRNAs and, together with other initiation factors, stimulates binding of mRNA and methionyl-tRNAi to the 40S ribosome. The eIF-3 complex specifically targets and initiates translation of a subset of mRNAs involved in cell proliferation. This subunit can bind 18S rRNA. The chain is Eukaryotic translation initiation factor 3 subunit G (tif35) from Aspergillus niger (strain ATCC MYA-4892 / CBS 513.88 / FGSC A1513).